The primary structure comprises 312 residues: Ribosomal protein L11 methyltransferase (312 aa).

The S-adenosyl-L-methionine site is built by Thr-160, Gly-181, Asp-203, and Asn-246.

Belongs to the methyltransferase superfamily. PrmA family.

It localises to the cytoplasm. It carries out the reaction L-lysyl-[protein] + 3 S-adenosyl-L-methionine = N(6),N(6),N(6)-trimethyl-L-lysyl-[protein] + 3 S-adenosyl-L-homocysteine + 3 H(+). Its function is as follows. Methylates ribosomal protein L11. The chain is Ribosomal protein L11 methyltransferase from Staphylococcus epidermidis (strain ATCC 12228 / FDA PCI 1200).